The primary structure comprises 570 residues: RNA polymerase I termination factor (570 aa).

Positions 1 to 16 are enriched in polar residues; sequence MDSVSNLKSTNFQNNN. Disordered regions lie at residues 1 to 21, 37 to 68, and 100 to 138; these read MDSV…PKES, HIKK…DMDW, and SSMR…AKIK. Residues 37-56 show a composition bias toward basic residues; the sequence is HIKKTKKKLKKQKKRKHGSK. Threonine 64 carries the phosphothreonine modification. Residues 108–137 show a composition bias toward basic residues; that stretch reads RSCHKKSSNSRSERKKHRKRKSSKERKAKI. A Myb-like 1 domain is found at 273-339; that stretch reads KFTPSEENAL…SIYKHIRRKY (67 aa). The HTH myb-type domain maps to 340 to 391; the sequence is HIFEQRGKWTPEEDQELARLCLEKEGHWTEVGKLLGRMPEDCRDRWRNYMKC. Positions 367–389 form a DNA-binding region, H-T-H motif; it reads WTEVGKLLGRMPEDCRDRWRNYM. 2 consecutive Myb-like domains span residues 392–486 and 493–549; these read GSKR…NKLV and SMLS…MREK.

Interacts with FOB1. Interacts with the RENT complex subunits NET1 and SIR2.

It is found in the nucleus. Its subcellular location is the nucleolus. Functionally, DNA-binding protein that recognizes sequence-specific replication termini (Ter sites) within rDNA. Binds to rDNA terminator elements and mediates efficient RNA polymerase I transcription termination. Required for rDNA silencing at the non-transcribed spacer 1 (NTS1). Promotes the association of SIR2 with NTS1 and contributes to maintenance of rDNA stability. The sequence is that of RNA polymerase I termination factor from Saccharomyces cerevisiae (strain ATCC 204508 / S288c) (Baker's yeast).